Here is a 161-residue protein sequence, read N- to C-terminus: Lipoprotein LpqH (161 aa).

Residues 1–21 form the signal peptide; that stretch reads MNRQLRFAVAGPEILAAVVSG. A compositionally biased stretch (low complexity) spans 21–46; the sequence is GCSSGNKSAPSSSASSSSTSPSASSG. A disordered region spans residues 21–49; sequence GCSSGNKSAPSSSASSSSTSPSASSGGAA. Cys-22 is lipidated: N-palmitoyl cysteine. Cys-22 carries the S-diacylglycerol cysteine lipid modification.

It belongs to the mycobacterial 19 kDa antigen family. In terms of processing, modified by Lgt on Cys-22 with an S-linked diacylglycerol with a mixture of C16, C18 and C19 fatty acids, signal peptide is removed by LspA, modifed by Lnt with an amide-linked mixture of C16 and C19 fatty acids.

Its subcellular location is the cell membrane. Might be involved in ligand transport. A host TLR2 agonist, modifies host gene expression in response to pathogen. In Mycobacterium avium, this protein is Lipoprotein LpqH (lpqH).